A 331-amino-acid chain; its full sequence is Nacrein-like protein P1 (331 aa).

An Alpha-carbonic anhydrase domain is found at 1–331 (QSPINIVSYD…LHALRNVEGY (331 aa)). Zn(2+) contacts are provided by histidine 69, histidine 71, and histidine 94. The segment at 138–240 (DEPDDEECKR…GENGHKHGCR (103 aa)) is disordered. Residues 144–156 (ECKRILKGHHPDN) are compositionally biased toward basic and acidic residues. Residues 157–232 (NENGNGDNGN…NNGENGNNGE (76 aa)) show a composition bias toward low complexity. Tandem repeats lie at residues 162-164 (GDN), 165-167 (GNN), 168-170 (GYN), 171-173 (GDN), 174-176 (GNN), 177-179 (GDN), 180-182 (GNN), 183-185 (GYN), 186-188 (GDN), 189-191 (GNN), 192-194 (GDN), 195-197 (GNN), 198-200 (GYN), 201-203 (GDN), 204-206 (GNN), 207-209 (GDN), 210-212 (GNN), 213-215 (GEN), 216-218 (GNN), 219-221 (GEN), 222-224 (GNN), 225-227 (GEN), 228-229 (GN), and 231-233 (GEN). Residues 162–233 (GDNGNNGYNG…NGENGNNGEN (72 aa)) form a 24 X 3 AA approximate tandem repeats of G-X-N region. Substrate is bound at residue 298 to 299 (TT).

This sequence belongs to the alpha-carbonic anhydrase family. Homooligomer; disulfide-linked. May also be disulfide-linked to insoluble organic matrix. It depends on Zn(2+) as a cofactor. As to expression, expressed in the mantle.

The protein resides in the secreted. The protein localises to the extracellular space. It localises to the extracellular matrix. It catalyses the reaction hydrogencarbonate + H(+) = CO2 + H2O. Functionally, acts as a negative regulator for calcification in the shells of mollusks. May function both as a calcium concentrator and as a carbonic anhydrase required for production of carbonate ions, which are assembled to CaCO(3) at mineralization sites. Is important for shell formation in both the calcitic prismatic layer and the aragonitic nacreous layer. Shows inhibitory activity of crystal formation when present in free state but, when attached to the insoluble matrix, may regulate the form and size of aragonite crystal. In Mizuhopecten yessoensis (Japanese scallop), this protein is Nacrein-like protein P1.